Here is a 307-residue protein sequence, read N- to C-terminus: tRNA pseudouridine synthase B (307 aa).

Aspartate 47 acts as the Nucleophile in catalysis.

Belongs to the pseudouridine synthase TruB family. Type 1 subfamily.

The enzyme catalyses uridine(55) in tRNA = pseudouridine(55) in tRNA. Its function is as follows. Responsible for synthesis of pseudouridine from uracil-55 in the psi GC loop of transfer RNAs. This Chromohalobacter salexigens (strain ATCC BAA-138 / DSM 3043 / CIP 106854 / NCIMB 13768 / 1H11) protein is tRNA pseudouridine synthase B.